The following is a 295-amino-acid chain: Virginiamycin B lyase (295 aa).

H227 is a binding site for substrate. Position 267 (E267) interacts with Mg(2+). H269 serves as the catalytic Proton acceptor. A Mg(2+)-binding site is contributed by E284.

The protein belongs to the Vgb family. As to quaternary structure, monomer. Mg(2+) is required as a cofactor.

Its function is as follows. Inactivates the type B streptogramin antibiotics by linearizing the lactone ring at the ester linkage, generating a free phenylglycine carboxylate and converting the threonyl moiety into 2-amino-butenoic acid. The sequence is that of Virginiamycin B lyase from Bacillus licheniformis (strain ATCC 14580 / DSM 13 / JCM 2505 / CCUG 7422 / NBRC 12200 / NCIMB 9375 / NCTC 10341 / NRRL NRS-1264 / Gibson 46).